The primary structure comprises 454 residues: Bifunctional protein GlmU (454 aa).

The segment at 1-229 is pyrophosphorylase; it reads MQRYAVVLAA…FDEIMGVNDR (229 aa). Residues 8–11, lysine 22, glutamine 72, and 77–78 each bind UDP-N-acetyl-alpha-D-glucosamine; these read LAAG and GT. Aspartate 102 contributes to the Mg(2+) binding site. Residues glycine 139, glutamate 154, and asparagine 227 each coordinate UDP-N-acetyl-alpha-D-glucosamine. Asparagine 227 lines the Mg(2+) pocket. The linker stretch occupies residues 230–250; sequence VALSKAEQAMRQRINEYHMRN. The interval 251–454 is N-acetyltransferase; it reads GVTLIDPSST…KPGYLNKNKE (204 aa). Arginine 332 and lysine 350 together coordinate UDP-N-acetyl-alpha-D-glucosamine. The active-site Proton acceptor is histidine 362. Tyrosine 365 and asparagine 376 together coordinate UDP-N-acetyl-alpha-D-glucosamine. Acetyl-CoA contacts are provided by residues 385-386, alanine 422, and arginine 439; that span reads NY.

This sequence in the N-terminal section; belongs to the N-acetylglucosamine-1-phosphate uridyltransferase family. It in the C-terminal section; belongs to the transferase hexapeptide repeat family. As to quaternary structure, homotrimer. Requires Mg(2+) as cofactor.

The protein localises to the cytoplasm. It catalyses the reaction alpha-D-glucosamine 1-phosphate + acetyl-CoA = N-acetyl-alpha-D-glucosamine 1-phosphate + CoA + H(+). It carries out the reaction N-acetyl-alpha-D-glucosamine 1-phosphate + UTP + H(+) = UDP-N-acetyl-alpha-D-glucosamine + diphosphate. It functions in the pathway nucleotide-sugar biosynthesis; UDP-N-acetyl-alpha-D-glucosamine biosynthesis; N-acetyl-alpha-D-glucosamine 1-phosphate from alpha-D-glucosamine 6-phosphate (route II): step 2/2. The protein operates within nucleotide-sugar biosynthesis; UDP-N-acetyl-alpha-D-glucosamine biosynthesis; UDP-N-acetyl-alpha-D-glucosamine from N-acetyl-alpha-D-glucosamine 1-phosphate: step 1/1. It participates in bacterial outer membrane biogenesis; LPS lipid A biosynthesis. Functionally, catalyzes the last two sequential reactions in the de novo biosynthetic pathway for UDP-N-acetylglucosamine (UDP-GlcNAc). The C-terminal domain catalyzes the transfer of acetyl group from acetyl coenzyme A to glucosamine-1-phosphate (GlcN-1-P) to produce N-acetylglucosamine-1-phosphate (GlcNAc-1-P), which is converted into UDP-GlcNAc by the transfer of uridine 5-monophosphate (from uridine 5-triphosphate), a reaction catalyzed by the N-terminal domain. In Staphylococcus carnosus (strain TM300), this protein is Bifunctional protein GlmU.